The sequence spans 426 residues: Glutamate-1-semialdehyde 2,1-aminomutase (426 aa).

Lys265 is subject to N6-(pyridoxal phosphate)lysine.

It belongs to the class-III pyridoxal-phosphate-dependent aminotransferase family. HemL subfamily. As to quaternary structure, homodimer. Pyridoxal 5'-phosphate is required as a cofactor.

Its subcellular location is the cytoplasm. It carries out the reaction (S)-4-amino-5-oxopentanoate = 5-aminolevulinate. It functions in the pathway porphyrin-containing compound metabolism; protoporphyrin-IX biosynthesis; 5-aminolevulinate from L-glutamyl-tRNA(Glu): step 2/2. This chain is Glutamate-1-semialdehyde 2,1-aminomutase, found in Escherichia coli O127:H6 (strain E2348/69 / EPEC).